A 255-amino-acid polypeptide reads, in one-letter code: Acetylglutamate kinase (255 aa).

Substrate-binding positions include 40-41, arginine 62, and asparagine 153; that span reads GG.

Belongs to the acetylglutamate kinase family. ArgB subfamily.

It is found in the cytoplasm. The enzyme catalyses N-acetyl-L-glutamate + ATP = N-acetyl-L-glutamyl 5-phosphate + ADP. It functions in the pathway amino-acid biosynthesis; L-arginine biosynthesis; N(2)-acetyl-L-ornithine from L-glutamate: step 2/4. Functionally, catalyzes the ATP-dependent phosphorylation of N-acetyl-L-glutamate. This chain is Acetylglutamate kinase, found in Bacillus cereus (strain AH820).